We begin with the raw amino-acid sequence, 371 residues long: MRKTLFSGVALAAVIAFGGSAWADVLVGIGIPVTGPNAVYGAQIQKGAEAAIKEVNDAGGINGEKIAITIGDDVSDPKQGISVANKFAADGVKFVIGHFNSGVTIPASQVYAENGILEISPGATNPQYTEQGLWNTFRTCGRDDQQGTVAGQYIFDHFKDAKIAVIHDKTPYGQGLADETKKKLNELGTKETLYEGVNVGEKDFSALIAKLKQAGVNVVYWGGLHPEAGLIIRQMADQGLKAQFISGDGIVSNELASIAGPAVEGTLNTFGPDPRNNPDNAELVKKFRDAGFEPEAYTLYSYAAVQSLAQAAKAAGSNDPQEVAKAMKEKGPFKTVLGDLSYDEKGDPKLPGYVMYKWEKGADGKYNYIQQ.

The N-terminal stretch at 1–23 (MRKTLFSGVALAAVIAFGGSAWA) is a signal peptide.

The protein belongs to the leucine-binding protein family.

In terms of biological role, component of an amino-acid transport system. The chain is Leu/Ile/Val-binding protein homolog 1 from Brucella suis biovar 1 (strain 1330).